The sequence spans 283 residues: Elongation factor Ts (283 aa).

The segment at 84–87 is involved in Mg(2+) ion dislocation from EF-Tu; sequence TDFV.

This sequence belongs to the EF-Ts family.

The protein resides in the cytoplasm. Functionally, associates with the EF-Tu.GDP complex and induces the exchange of GDP to GTP. It remains bound to the aminoacyl-tRNA.EF-Tu.GTP complex up to the GTP hydrolysis stage on the ribosome. This chain is Elongation factor Ts, found in Bifidobacterium longum subsp. infantis (strain ATCC 15697 / DSM 20088 / JCM 1222 / NCTC 11817 / S12).